We begin with the raw amino-acid sequence, 123 residues long: Glycophorin-B (123 aa).

An N-terminal signal peptide occupies residues 1 to 19 (MYGKIIFVLLLSEIVSISA). A helical transmembrane segment spans residues 93-113 (VVIILIILCVMAGVIGTILLI).

This sequence belongs to the glycophorin-A family. Component of the ankyrin-1 complex in the erythrocyte, composed of ANK1, RHCE, RHAG, SLC4A1, EPB42, GYPA, GYPB and AQP1. Interacts (via the N-terminal) with RHAG; this interaction bridges the (RHAG)2(RHCE) heterotrimer with the SLC4A1 Band 3 I dimer complexed with GYPA. In terms of processing, the N-terminal extracellular domain is heavily glycosylated on serine and threonine residues.

It localises to the cell membrane. Functionally, component of the ankyrin-1 complex, a multiprotein complex involved in the stability and shape of the erythrocyte membrane. In Pan troglodytes (Chimpanzee), this protein is Glycophorin-B.